Reading from the N-terminus, the 367-residue chain is sn-glycerol-3-phosphate import ATP-binding protein UgpC (367 aa).

Positions 4 to 235 constitute an ABC transporter domain; it reads LSLRNVQKTY…PASTFVAGFI (232 aa). An ATP-binding site is contributed by 37-44; it reads GPSGCGKS.

The protein belongs to the ABC transporter superfamily. sn-glycerol-3-phosphate importer (TC 3.A.1.1.3) family. As to quaternary structure, the complex is composed of two ATP-binding proteins (UgpC), two transmembrane proteins (UgpA and UgpE) and a solute-binding protein (UgpB).

Its subcellular location is the cell inner membrane. The catalysed reaction is sn-glycerol 3-phosphate(out) + ATP + H2O = sn-glycerol 3-phosphate(in) + ADP + phosphate + H(+). Part of the ABC transporter complex UgpBAEC involved in sn-glycerol-3-phosphate (G3P) import. Responsible for energy coupling to the transport system. The chain is sn-glycerol-3-phosphate import ATP-binding protein UgpC from Cupriavidus metallidurans (strain ATCC 43123 / DSM 2839 / NBRC 102507 / CH34) (Ralstonia metallidurans).